The primary structure comprises 134 residues: Complexin-1 (134 aa).

Residues 1–112 form a disordered region; that stretch reads MEFVMKQALG…PGCGDAAEEE (112 aa). Residues 15 to 81 are compositionally biased toward basic and acidic residues; sequence DMGKMLGGDE…IKKKEEREAE (67 aa). Positions 29–69 form a coiled coil; the sequence is DAAKKEEERQEALRQEEEERKAKYAKMEAEREAVRQGIRDK. The segment at 48-70 is interaction with the SNARE complex; sequence RKAKYAKMEAEREAVRQGIRDKY.

Belongs to the complexin/synaphin family. Binds to the SNARE core complex containing SNAP25, VAMP2 and STX1A.

It localises to the cytoplasm. The protein localises to the cytosol. It is found in the perikaryon. The protein resides in the presynapse. Positively regulates a late step in synaptic vesicle exocytosis. Organizes the SNAREs into a cross-linked zigzag topology that, when interposed between the vesicle and plasma membranes, is incompatible with fusion, thereby preventing SNAREs from releasing neurotransmitters until an action potential arrives at the synapse. Also involved in glucose-induced secretion of insulin by pancreatic beta-cells. The chain is Complexin-1 (CPLX1) from Bos taurus (Bovine).